An 87-amino-acid polypeptide reads, in one-letter code: Small ribosomal subunit protein bS20 (87 aa).

The span at 1-22 shows a compositional bias: basic residues; it reads MANIKSAKKRAVQSEKRRKHNA. The segment at 1-27 is disordered; it reads MANIKSAKKRAVQSEKRRKHNASSRSM.

It belongs to the bacterial ribosomal protein bS20 family.

Functionally, binds directly to 16S ribosomal RNA. In Pectobacterium atrosepticum (strain SCRI 1043 / ATCC BAA-672) (Erwinia carotovora subsp. atroseptica), this protein is Small ribosomal subunit protein bS20.